Reading from the N-terminus, the 286-residue chain is NADPH-dependent 7-cyano-7-deazaguanine reductase (286 aa).

Position 92–94 (92–94) interacts with substrate; sequence IES. Residue 94–95 coordinates NADPH; sequence SK. Residue Cys194 is the Thioimide intermediate of the active site. Residue Asp201 is the Proton donor of the active site. Residue 233–234 coordinates substrate; it reads HE. 262-263 is a binding site for NADPH; it reads RG.

Belongs to the GTP cyclohydrolase I family. QueF type 2 subfamily. Homodimer.

Its subcellular location is the cytoplasm. The catalysed reaction is 7-aminomethyl-7-carbaguanine + 2 NADP(+) = 7-cyano-7-deazaguanine + 2 NADPH + 3 H(+). It participates in tRNA modification; tRNA-queuosine biosynthesis. Catalyzes the NADPH-dependent reduction of 7-cyano-7-deazaguanine (preQ0) to 7-aminomethyl-7-deazaguanine (preQ1). The protein is NADPH-dependent 7-cyano-7-deazaguanine reductase of Shewanella sp. (strain MR-7).